Consider the following 733-residue polypeptide: Fibronectin type III domain-containing protein 7 (733 aa).

A signal peptide spans 1-25 (MAGGRETCLPLIGFILICLKMVASA). Fibronectin type-III domains are found at residues 28–115 (APEI…TVLA), 116–202 (APIL…TSPR), 203–288 (APAN…TVAC), 289–373 (APGR…TAPC), 374–459 (CPSD…TAPC), 460–544 (SPEI…TVPC), 545–632 (CPTG…CCPL), and 631–715 (PLGV…YSVT). Asn-230 is a glycosylation site (N-linked (GlcNAc...) asparagine). The N-linked (GlcNAc...) asparagine glycan is linked to Asn-433.

The protein localises to the secreted. This chain is Fibronectin type III domain-containing protein 7 (FNDC7), found in Homo sapiens (Human).